The primary structure comprises 290 residues: MRSLHILLVITASLLASLAVSAEADPSTRTANVVENNKDKSRFLRDGGTTEAQTDEERATITLGDKVVSDKAATKDLLERLLALGTPLKTVQKEFLNMPLIKTFAELSKHPNWRALDKYERMQWQKLNEGQTLTYMRVGDRSYSKEKAQEQLLRWVAQKKTVKSVYDDLQIEGFARNTDAARLNWRAYNMYDKWFTAASQMQRNPQQYAKFGTGYHSEQKTTEVFEKWAMEGTHIKSVIKTLNLNNKSASEMANNENFPALLKYVKLYLDFKPFRDLNAKSRLQARRPIS.

Positions Met1 to Ala24 are cleaved as a signal peptide. The interval Val33–Glu56 is disordered. The span at Asn36–Arg45 shows a compositional bias: basic and acidic residues. The RxLR-dEER motif lies at Arg42–Arg58. The W1 motif stretch occupies residues Lys118–Arg141. The tract at residues Gln151–Phe174 is W2 motif. Residues Val224–Lys247 form a W3 motif region. N-linked (GlcNAc...) asparagine glycosylation is present at Asn246. Residues Ala249 to Asp270 are y motif.

It belongs to the RxLR effector family.

The protein resides in the secreted. Its subcellular location is the host cytoplasm. It localises to the host nucleus. It is found in the host nucleolus. The protein localises to the host cytoskeleton. In terms of biological role, secreted effector that acts as an elicitor of hypersensitive response (HR) specifically on plants carrying defense protein R4, through its interaction with this protein. The polypeptide is RxLR effector protein Avr4 (Phytophthora mirabilis).